Here is a 109-residue protein sequence, read N- to C-terminus: UPF0122 protein CLL_A1244 (109 aa).

It belongs to the UPF0122 family.

Functionally, might take part in the signal recognition particle (SRP) pathway. This is inferred from the conservation of its genetic proximity to ftsY/ffh. May be a regulatory protein. The protein is UPF0122 protein CLL_A1244 of Clostridium botulinum (strain Eklund 17B / Type B).